Reading from the N-terminus, the 203-residue chain is High frequency lysogenization protein HflD homolog (203 aa).

It belongs to the HflD family.

It is found in the cytoplasm. The protein resides in the cell inner membrane. This is High frequency lysogenization protein HflD homolog from Histophilus somni (strain 2336) (Haemophilus somnus).